The chain runs to 263 residues: MEINTKLLISVTCISFFTFQLLFYFVSYWFSAKVSPGFNSLSFKKKIEWNSRVVSTCHSLVVGIFGLYIFLFDEATKADPLWGGPSLANVNIAIASGYLISDLSIIILYWKVIGDKFFIMHHCASLYAYYLVLKNGVLAYIGNFRLLAELSSPFVNQRWFFEALKYPKFSKAIVINGILMTVVFFIVRIASMLPHYGFMYSVYGTEPYIRLGVLIQLSWVISCVVLDVMNVMWMIKISKGCIKVISHIRQEKAKNSLQNGKLD.

The next 4 helical transmembrane spans lie at 7 to 27 (LLIS…YFVS), 53 to 73 (VVST…FLFD), 90 to 110 (VNIA…ILYW), and 124 to 144 (ASLY…IGNF). Positions 44 to 246 (KKKIEWNSRV…ISKGCIKVIS (203 aa)) constitute a TLC domain. At Lys-165 the chain carries N6-acetyllysine. The next 2 helical transmembrane spans lie at 173–193 (IVIN…ASML) and 211–231 (LGVL…VMNV).

It belongs to the TLCD4 family.

The protein localises to the membrane. The sequence is that of TLC domain-containing protein 4 from Homo sapiens (Human).